The chain runs to 302 residues: Protein FdhE homolog (302 aa).

The protein belongs to the FdhE family.

It localises to the cytoplasm. Necessary for formate dehydrogenase activity. The chain is Protein FdhE homolog from Haemophilus influenzae (strain PittGG).